Reading from the N-terminus, the 376-residue chain is Gibberellic acid methyltransferase 1 (376 aa).

7 residues coordinate S-adenosyl-L-homocysteine: tyrosine 22, cysteine 64, asparagine 69, aspartate 104, leucine 105, serine 136, and phenylalanine 137. Residue tryptophan 158 coordinates gibberellin A9. Mg(2+) is bound by residues asparagine 175, valine 179, arginine 265, aspartate 266, phenylalanine 268, and asparagine 269.

It belongs to the methyltransferase superfamily. Type-7 methyltransferase family. SABATH subfamily. Mg(2+) serves as cofactor. In terms of tissue distribution, expressed in siliques, developing seeds, anthers and germinating seeds. Not detected in leaves, stems, flowers and roots.

It catalyses the reaction gibberellin A9 + S-adenosyl-L-methionine = O-methyl gibberellin A9 + S-adenosyl-L-homocysteine. Up-regulated by K(+) and NH(4+), down-regulated by Zn(2+), Cu(2+), Fe(2+) and Fe(3+). Functionally, methylates the carboxyl group of several gibberellins (GAs). Substrate preference is GA9 &gt; GA20 &gt; GA3 &gt; GA4 &gt; GA34 &gt; GA51 &gt; GA1 &gt; GA19 &gt; GA12. No activity with diterpenes abietic acid and ent-kaurenoic acid. The protein is Gibberellic acid methyltransferase 1 (GAMT1) of Arabidopsis thaliana (Mouse-ear cress).